A 304-amino-acid chain; its full sequence is Aspartate carbamoyltransferase catalytic subunit (304 aa).

Positions 49 and 50 each coordinate carbamoyl phosphate. An L-aspartate-binding site is contributed by lysine 77. Residues arginine 99, histidine 127, and glutamine 130 each coordinate carbamoyl phosphate. The L-aspartate site is built by arginine 160 and arginine 211. Carbamoyl phosphate is bound by residues alanine 252 and proline 253.

It belongs to the aspartate/ornithine carbamoyltransferase superfamily. ATCase family. Heterododecamer (2C3:3R2) of six catalytic PyrB chains organized as two trimers (C3), and six regulatory PyrI chains organized as three dimers (R2).

It carries out the reaction carbamoyl phosphate + L-aspartate = N-carbamoyl-L-aspartate + phosphate + H(+). Its pathway is pyrimidine metabolism; UMP biosynthesis via de novo pathway; (S)-dihydroorotate from bicarbonate: step 2/3. Its function is as follows. Catalyzes the condensation of carbamoyl phosphate and aspartate to form carbamoyl aspartate and inorganic phosphate, the committed step in the de novo pyrimidine nucleotide biosynthesis pathway. The polypeptide is Aspartate carbamoyltransferase catalytic subunit (Bacillus cereus (strain ZK / E33L)).